The sequence spans 693 residues: Elongation factor G (693 aa).

In terms of domain architecture, tr-type G spans 8–283 (NKVRNFGIAA…AVCDYLPSPL (276 aa)). Residues 17 to 24 (AHIDAGKT), 81 to 85 (DTPGH), and 135 to 138 (NKMD) each bind GTP.

The protein belongs to the TRAFAC class translation factor GTPase superfamily. Classic translation factor GTPase family. EF-G/EF-2 subfamily.

Its subcellular location is the cytoplasm. Its function is as follows. Catalyzes the GTP-dependent ribosomal translocation step during translation elongation. During this step, the ribosome changes from the pre-translocational (PRE) to the post-translocational (POST) state as the newly formed A-site-bound peptidyl-tRNA and P-site-bound deacylated tRNA move to the P and E sites, respectively. Catalyzes the coordinated movement of the two tRNA molecules, the mRNA and conformational changes in the ribosome. This chain is Elongation factor G, found in Endomicrobium trichonymphae.